The chain runs to 457 residues: Multidrug resistance protein MdtK (457 aa).

Transmembrane regions (helical) follow at residues 11–31 (LLAL…MGFV), 53–73 (IWLP…PVIA), 93–113 (WLAG…GYII), 127–147 (AVGY…FQVA), 160–180 (GMVM…IFIY), 189–209 (GGVG…LAMV), 243–263 (LPIA…ALLV), 276–296 (IALN…AAVT), 314–334 (AART…IFTV), 350–370 (VVTL…SDSI), 387–407 (IFYI…YILA), and 418–438 (PAGF…MMML).

This sequence belongs to the multi antimicrobial extrusion (MATE) (TC 2.A.66.1) family. MdtK subfamily.

The protein localises to the cell inner membrane. Its function is as follows. Multidrug efflux pump that functions probably as a Na(+)/drug antiporter. The protein is Multidrug resistance protein MdtK of Escherichia coli O9:H4 (strain HS).